Reading from the N-terminus, the 414-residue chain is Carboxynorspermidine synthase (414 aa).

This sequence belongs to the saccharopine dehydrogenase family. Carboxynorspermidine synthase subfamily. In terms of assembly, homodimer.

It carries out the reaction carboxynorspermidine + NADP(+) + H2O = L-aspartate 4-semialdehyde + propane-1,3-diamine + NADPH + H(+). The enzyme catalyses carboxyspermidine + NADP(+) + H2O = L-aspartate 4-semialdehyde + putrescine + NADPH + H(+). Its activity is regulated as follows. Activated by dithiothreitol and inhibited by SH-reactive compounds. Its function is as follows. Involved in norspermidine biosynthesis. Catalyzes the synthesis of carboxynorspermidine from L-aspartate 4-semialdehyde and 1,3-diaminopropane. Is also slightly active with putrescine as a substrate. The protein is Carboxynorspermidine synthase of Vibrio alginolyticus (strain ATCC 17749 / DSM 2171 / NBRC 15630 / NCIMB 1903 / NCTC 12160 / XII-53).